A 318-amino-acid polypeptide reads, in one-letter code: D-alanine--D-alanine ligase (318 aa).

Residues 101-307 form the ATP-grasp domain; that stretch reads KKIIQYEGLP…FPDLIEKLVE (207 aa). ATP is bound at residue 135–190; it reads CREMGLPLVVKAPTQGSTIGMSFVHKEEDMAGALELAYDYDPVALVEQFIRGTEVT. 3 residues coordinate Mg(2+): aspartate 261, glutamate 274, and asparagine 276.

The protein belongs to the D-alanine--D-alanine ligase family. It depends on Mg(2+) as a cofactor. Requires Mn(2+) as cofactor.

It localises to the cytoplasm. It carries out the reaction 2 D-alanine + ATP = D-alanyl-D-alanine + ADP + phosphate + H(+). It participates in cell wall biogenesis; peptidoglycan biosynthesis. Its function is as follows. Cell wall formation. This chain is D-alanine--D-alanine ligase, found in Pelotomaculum thermopropionicum (strain DSM 13744 / JCM 10971 / SI).